We begin with the raw amino-acid sequence, 457 residues long: Cysteine--tRNA ligase (457 aa).

Cysteine 28 serves as a coordination point for Zn(2+). The short motif at 30–40 is the 'HIGH' region element; it reads MTVYDLCHIGH. Residues cysteine 209, histidine 234, and glutamate 238 each contribute to the Zn(2+) site. The short motif at 266–270 is the 'KMSKS' region element; sequence KMSKS. Lysine 269 contributes to the ATP binding site.

This sequence belongs to the class-I aminoacyl-tRNA synthetase family. Monomer. It depends on Zn(2+) as a cofactor.

The protein localises to the cytoplasm. It carries out the reaction tRNA(Cys) + L-cysteine + ATP = L-cysteinyl-tRNA(Cys) + AMP + diphosphate. This is Cysteine--tRNA ligase from Chromobacterium violaceum (strain ATCC 12472 / DSM 30191 / JCM 1249 / CCUG 213 / NBRC 12614 / NCIMB 9131 / NCTC 9757 / MK).